A 238-amino-acid chain; its full sequence is Uridylate kinase (238 aa).

Position 12–15 (12–15) interacts with ATP; sequence KLSG. Position 54 (Gly-54) interacts with UMP. Residues Gly-55 and Arg-59 each contribute to the ATP site. UMP is bound by residues Asp-74 and 135–142; that span reads TGNPFFTT. ATP contacts are provided by Thr-162, Tyr-168, and Asp-171.

The protein belongs to the UMP kinase family. In terms of assembly, homohexamer.

The protein resides in the cytoplasm. The enzyme catalyses UMP + ATP = UDP + ADP. The protein operates within pyrimidine metabolism; CTP biosynthesis via de novo pathway; UDP from UMP (UMPK route): step 1/1. With respect to regulation, inhibited by UTP. Functionally, catalyzes the reversible phosphorylation of UMP to UDP. The protein is Uridylate kinase of Methylobacillus flagellatus (strain ATCC 51484 / DSM 6875 / VKM B-1610 / KT).